The following is a 175-amino-acid chain: MLPAYLSNPFAAVFGGGKPIDGGRTYKDGRRILGDGKTYRGLFSGIFCGFLAGCIEIWLSMRGFEIMGIKMPTFGPNYASALIVVLALPSGALFGDMFKSFFKRRMGLKRGASLPLVDQLDFVVGAWFFTYLAAPEWFVSNFTTGIALTVLIMTPLLHLTTNIIGYFIGVKKEPW.

4 helical membrane passes run 41 to 61, 78 to 98, 122 to 142, and 150 to 170; these read GLFS…WLSM, YASA…GDMF, FVVG…VSNF, and VLIM…FIGV.

This sequence belongs to the CDP-archaeol synthase family. The cofactor is Mg(2+).

It is found in the cell membrane. It carries out the reaction 2,3-bis-O-(geranylgeranyl)-sn-glycerol 1-phosphate + CTP + H(+) = CDP-2,3-bis-O-(geranylgeranyl)-sn-glycerol + diphosphate. Its pathway is membrane lipid metabolism; glycerophospholipid metabolism. Catalyzes the formation of CDP-2,3-bis-(O-geranylgeranyl)-sn-glycerol (CDP-archaeol) from 2,3-bis-(O-geranylgeranyl)-sn-glycerol 1-phosphate (DGGGP) and CTP. This reaction is the third ether-bond-formation step in the biosynthesis of archaeal membrane lipids. This chain is CDP-archaeol synthase, found in Methanosarcina acetivorans (strain ATCC 35395 / DSM 2834 / JCM 12185 / C2A).